A 226-amino-acid chain; its full sequence is Cytidylate kinase (226 aa).

ATP is bound at residue 10–18 (GPASSGKST).

This sequence belongs to the cytidylate kinase family. Type 1 subfamily.

The protein resides in the cytoplasm. It carries out the reaction CMP + ATP = CDP + ADP. It catalyses the reaction dCMP + ATP = dCDP + ADP. The chain is Cytidylate kinase from Streptococcus pyogenes serotype M28 (strain MGAS6180).